We begin with the raw amino-acid sequence, 261 residues long: Leucine-rich repeat-containing protein 18 (261 aa).

7 LRR repeats span residues 28 to 49 (GKKR…ILRL), 51 to 72 (DMDE…ISKF), 74 to 95 (NLRW…IGQM), 97 to 118 (SLLY…VELK), 122 to 144 (NIRA…GALK), 145 to 167 (ELHE…SKLP), and 168 to 189 (KLKK…EIFI).

Its subcellular location is the cytoplasm. In terms of biological role, may be involved in the regulation of spermatogenesis and sperm maturation. The sequence is that of Leucine-rich repeat-containing protein 18 (LRRC18) from Homo sapiens (Human).